The sequence spans 201 residues: Lipopolysaccharide core heptose(II)-phosphate phosphatase (201 aa).

The signal sequence occupies residues Met-1 to Ser-35.

This sequence belongs to the phosphoglycerate mutase family. Ais subfamily.

Its subcellular location is the periplasm. It participates in bacterial outer membrane biogenesis; lipopolysaccharide metabolism. Functionally, catalyzes the dephosphorylation of heptose(II) of the outer membrane lipopolysaccharide core. In Salmonella newport (strain SL254), this protein is Lipopolysaccharide core heptose(II)-phosphate phosphatase.